A 464-amino-acid polypeptide reads, in one-letter code: D-inositol 3-phosphate glycosyltransferase (464 aa).

The segment covering 1–20 (MEGAPRRPDRHARSEEERHV) has biased composition (basic and acidic residues). The tract at residues 1–44 (MEGAPRRPDRHARSEEERHVSQYASRLGRRSPAAPTRRRMLRKP) is disordered. His53 serves as a coordination point for 1D-myo-inositol 3-phosphate. UDP-N-acetyl-alpha-D-glucosamine contacts are provided by residues 59–60 (QP) and Gly67. Residues 64–69 (DAGGMN), Lys122, Tyr155, Thr179, and Arg199 contribute to the 1D-myo-inositol 3-phosphate site. Residues Arg274, Lys279, and Val340 each contribute to the UDP-N-acetyl-alpha-D-glucosamine site. Phe349, Arg350, and Ala352 together coordinate Mg(2+). UDP-N-acetyl-alpha-D-glucosamine is bound by residues Glu362 and Glu370. Residue Thr376 coordinates Mg(2+).

It belongs to the glycosyltransferase group 1 family. MshA subfamily. In terms of assembly, homodimer.

The catalysed reaction is 1D-myo-inositol 3-phosphate + UDP-N-acetyl-alpha-D-glucosamine = 1D-myo-inositol 2-acetamido-2-deoxy-alpha-D-glucopyranoside 3-phosphate + UDP + H(+). In terms of biological role, catalyzes the transfer of a N-acetyl-glucosamine moiety to 1D-myo-inositol 3-phosphate to produce 1D-myo-inositol 2-acetamido-2-deoxy-glucopyranoside 3-phosphate in the mycothiol biosynthesis pathway. This Streptomyces avermitilis (strain ATCC 31267 / DSM 46492 / JCM 5070 / NBRC 14893 / NCIMB 12804 / NRRL 8165 / MA-4680) protein is D-inositol 3-phosphate glycosyltransferase.